The following is a 404-amino-acid chain: Keratin, type I cuticular Ha3-I (404 aa).

Residues 1–56 (MPYNCCLPAMSCRTSCSSRPCVPPSCHGCTLPGACNIPANVGNCNWFCEGSFNGNE) are head. The 312-residue stretch at 56 to 367 (EKETMQFLND…GLLESEDCKL (312 aa)) folds into the IF rod domain. The segment at 57-91 (KETMQFLNDRLASYMEKVRQLERENAELECRIQER) is coil 1A. Residues 92–102 (NQQQDPLVCPA) form a linker 1 region. A coil 1B region spans residues 103 to 203 (YQAYFRTIEE…HEQEVNTLRC (101 aa)). Residues 204–219 (QLGDRLNVEVDAAPTV) are linker 12. Positions 220-363 (DLNRVLNETR…NTYRGLLESE (144 aa)) are coil 2. A tail region spans residues 364-404 (DCKLPCNPCATTNACDKPIGPCVPNPCVTRPRCGPCNTFVR).

Belongs to the intermediate filament family.

The chain is Keratin, type I cuticular Ha3-I from Mus musculus (Mouse).